A 258-amino-acid polypeptide reads, in one-letter code: Imidazole glycerol phosphate synthase subunit HisF (258 aa).

Active-site residues include Asp12 and Asp131.

The protein belongs to the HisA/HisF family. As to quaternary structure, heterodimer of HisH and HisF.

It localises to the cytoplasm. It catalyses the reaction 5-[(5-phospho-1-deoxy-D-ribulos-1-ylimino)methylamino]-1-(5-phospho-beta-D-ribosyl)imidazole-4-carboxamide + L-glutamine = D-erythro-1-(imidazol-4-yl)glycerol 3-phosphate + 5-amino-1-(5-phospho-beta-D-ribosyl)imidazole-4-carboxamide + L-glutamate + H(+). Its pathway is amino-acid biosynthesis; L-histidine biosynthesis; L-histidine from 5-phospho-alpha-D-ribose 1-diphosphate: step 5/9. Functionally, IGPS catalyzes the conversion of PRFAR and glutamine to IGP, AICAR and glutamate. The HisF subunit catalyzes the cyclization activity that produces IGP and AICAR from PRFAR using the ammonia provided by the HisH subunit. The sequence is that of Imidazole glycerol phosphate synthase subunit HisF from Paenarthrobacter aurescens (strain TC1).